A 1733-amino-acid polypeptide reads, in one-letter code: Probable nuclear antigen (1733 aa).

10 disordered regions span residues 1–41 (MNLF…THFT), 71–394 (PHPP…EQQV), 437–506 (AGAG…EGAQ), 520–548 (APAAAGDEDGPQRGAEPPAVGRAVPEGGA), 882–907 (LGGGGGGGQQRGSGVRSGPESEGAAL), 993–1141 (AGGP…EDAA), 1223–1242 (PERVLGGHGVPDVRQRRGHA), 1348–1475 (GAGP…GRAG), 1585–1608 (SGGGGAAAAGRRDRPGGGGGWGSG), and 1630–1665 (PRRRPGLTDRVPPRGGPSPRGCRGAGRAGGGGRGGC). Residues 21–31 (DHHHQQHHHHP) are compositionally biased toward basic residues. The span at 77 to 97 (PQDHHRPTPARDHRDPRDHLP) shows a compositional bias: basic and acidic residues. The span at 113-131 (TTTTTIKDPQHPQDPLLLP) shows a compositional bias: low complexity. The span at 135-147 (LQEEDPHLLRPTR) shows a compositional bias: basic and acidic residues. Over residues 179 to 189 (GGGPPSPPPRP) the composition is skewed to pro residues. The span at 190–201 (STSSSSSHQGPP) shows a compositional bias: low complexity. The span at 202-220 (STRPPPPQRPPPRWPPPSP) shows a compositional bias: pro residues. A compositionally biased stretch (polar residues) spans 227–240 (RAGSENTAQTLFSH). The span at 272-299 (PPPSPPPRPPPPLPPPPPPPPPPQPPPA) shows a compositional bias: pro residues. A compositionally biased stretch (basic residues) spans 316 to 326 (GGRRRGGKRRR). A compositionally biased stretch (acidic residues) spans 336–354 (DAEEEEDGDGDEDEDEDRA). The segment covering 355-364 (EGEGREDGGE) has biased composition (basic and acidic residues). Composition is skewed to gly residues over residues 365 to 374 (GPRGAGGGAG), 454 to 466 (GAPGGGADAGLEG), and 479 to 494 (GGDGARGQHQRGGLGV). The segment covering 495-506 (GLQQRRGAEGAQ) has biased composition (low complexity). The span at 882-892 (LGGGGGGGQQR) shows a compositional bias: gly residues. Residues 893-907 (GSGVRSGPESEGAAL) are compositionally biased toward low complexity. 2 stretches are compositionally biased toward gly residues: residues 993 to 1004 (AGGPGAGEAGGG) and 1027 to 1043 (AGRGLRGPGPRGGLGEP). Basic and acidic residues-rich tracts occupy residues 1078–1087 (GAGDEGDRVR) and 1100–1112 (RVAEREQRGRHLL). Over residues 1116 to 1127 (GPEGGRGAGGRG) the composition is skewed to gly residues. Positions 1385–1407 (GPGGLRGRGRGGRGGGGGGGGRG) are enriched in gly residues. 2 stretches are compositionally biased toward basic residues: residues 1408–1420 (PRGRGGRRRRRWR) and 1444–1453 (RGGRGGRGGR). The segment covering 1454 to 1474 (GRGGGRAPRGGGGGPGGGGRA) has biased composition (gly residues). Gly residues predominate over residues 1652–1665 (RGAGRAGGGGRGGC).

The polypeptide is Probable nuclear antigen (Sus scrofa (Pig)).